Reading from the N-terminus, the 180-residue chain is Insulin-like growth factor 2 (180 aa).

A signal peptide spans 1-24 (MGIPVGKSMLVLLISLAFALCCIA). Positions 25 to 52 (AYRPSETLCGGELVDTLQFVCSDRGFYF) are b. 3 disulfide bridges follow: Cys33–Cys71, Cys45–Cys84, and Cys70–Cys75. The segment at 53-64 (SRPSSRANRRSR) is c. Residues 65–85 (GIVEECCFRSCDLALLETYCA) form an a region. A d region spans residues 86–91 (TPAKSE). Positions 92–180 (RDVSTSQAVL…ASSEMSSNHQ (89 aa)) are cleaved as a propeptide — e peptide. Residues 160–180 (VLPPKDPAHGGASSEMSSNHQ) are disordered.

Belongs to the insulin family. As to quaternary structure, interacts with MYORG; this interaction is required for IGF2 secretion. Interacts with integrins ITGAV:ITGB3 and ITGA6:ITGB4; integrin-binding is required for IGF2 signaling. Interacts with IGFBP2. Proteolytically processed by PCSK4, proIGF2 is cleaved at Arg-128 and Arg-92 to generate big-IGF2 and mature IGF2.

The protein localises to the secreted. In terms of biological role, the insulin-like growth factors possess growth-promoting activity. Major fetal growth hormone in mammals. Plays a key role in regulating fetoplacental development. IGF2 is influenced by placental lactogen. Also involved in tissue differentiation. In adults, involved in glucose metabolism in adipose tissue, skeletal muscle and liver. Acts as a ligand for integrin which is required for IGF2 signaling. Positively regulates myogenic transcription factor MYOD1 function by facilitating the recruitment of transcriptional coactivators, thereby controlling muscle terminal differentiation. Inhibits myoblast differentiation and modulates metabolism via increasing the mitochondrial respiration rate. Preptin undergoes glucose-mediated co-secretion with insulin, and acts as a physiological amplifier of glucose-mediated insulin secretion. Exhibits osteogenic properties by increasing osteoblast mitogenic activity through phosphoactivation of MAPK1 and MAPK3. In Rattus norvegicus (Rat), this protein is Insulin-like growth factor 2.